We begin with the raw amino-acid sequence, 262 residues long: Ribosomal RNA small subunit methyltransferase A (262 aa).

The S-adenosyl-L-methionine site is built by histidine 13, leucine 15, glycine 40, glutamate 61, aspartate 85, and asparagine 103.

It belongs to the class I-like SAM-binding methyltransferase superfamily. rRNA adenine N(6)-methyltransferase family. RsmA subfamily.

It is found in the cytoplasm. The enzyme catalyses adenosine(1518)/adenosine(1519) in 16S rRNA + 4 S-adenosyl-L-methionine = N(6)-dimethyladenosine(1518)/N(6)-dimethyladenosine(1519) in 16S rRNA + 4 S-adenosyl-L-homocysteine + 4 H(+). Functionally, specifically dimethylates two adjacent adenosines (A1518 and A1519) in the loop of a conserved hairpin near the 3'-end of 16S rRNA in the 30S particle. May play a critical role in biogenesis of 30S subunits. In Bordetella petrii (strain ATCC BAA-461 / DSM 12804 / CCUG 43448), this protein is Ribosomal RNA small subunit methyltransferase A.